Consider the following 119-residue polypeptide: Large ribosomal subunit protein bL12 (119 aa).

The protein belongs to the bacterial ribosomal protein bL12 family. Homodimer. Part of the ribosomal stalk of the 50S ribosomal subunit. Forms a multimeric L10(L12)X complex, where L10 forms an elongated spine to which 2 to 4 L12 dimers bind in a sequential fashion. Binds GTP-bound translation factors.

Its function is as follows. Forms part of the ribosomal stalk which helps the ribosome interact with GTP-bound translation factors. Is thus essential for accurate translation. In Lysinibacillus sphaericus (strain C3-41), this protein is Large ribosomal subunit protein bL12.